The sequence spans 201 residues: Small ribosomal subunit protein uS4c (201 aa).

The S4 RNA-binding domain occupies 89–152 (MRLDNILFRL…NSRTLVQNLL (64 aa)).

It belongs to the universal ribosomal protein uS4 family. Part of the 30S ribosomal subunit. Contacts protein S5. The interaction surface between S4 and S5 is involved in control of translational fidelity.

It localises to the plastid. It is found in the chloroplast. In terms of biological role, one of the primary rRNA binding proteins, it binds directly to 16S rRNA where it nucleates assembly of the body of the 30S subunit. With S5 and S12 plays an important role in translational accuracy. The polypeptide is Small ribosomal subunit protein uS4c (rps4) (Arabidopsis thaliana (Mouse-ear cress)).